Reading from the N-terminus, the 457-residue chain is Cell division cycle 20.1, cofactor of APC complex (457 aa).

7 WD repeats span residues 138–175 (VDDF…TSEL), 180–219 (EEKG…QLRT), 223–260 (GHQS…PIVE), 264–303 (GHTQ…SNST), 312–354 (EHTS…CLNS), 356–397 (DTGS…KMAE), and 400–439 (GHTS…ETAK).

Belongs to the WD repeat CDC20/Fizzy family. The APC/C is composed of at least 11 subunits that stay tightly associated throughout the cell cycle. Interacts with APC10, FZR1, FZR2, FZR3. Binds to GIG1 and PYM. Part of the mitotic checkpoint complex (MCC); interacts with MAD2, BUB3.1, BUBR1 and BUB1. Binds to cyclins CYCA1-2, CYCB2-1 and CYCB2-2. Interacts with PANS1. Expressed in meristems and organ primordia. Present in flowers, leaves, stems, roots, pollen grains and developing seeds.

The protein resides in the nucleus. It functions in the pathway protein modification; protein ubiquitination. Component of the anaphase promoting complex/cyclosome (APC/C), a cell cycle-regulated E3 ubiquitin-protein ligase complex that controls progression through mitosis and the G1 phase of the cell cycle. The polypeptide is Cell division cycle 20.1, cofactor of APC complex (CDC20-1) (Arabidopsis thaliana (Mouse-ear cress)).